The primary structure comprises 146 residues: Hemoglobin subunit beta (146 aa).

Valine 1 carries the N-acetylvaline modification. The 145-residue stretch at 2–146 (HLTADEKAAV…VATALAHKYH (145 aa)) folds into the Globin domain. Phosphothreonine is present on threonine 12. A Phosphoserine modification is found at serine 44. Lysine 59 carries the post-translational modification N6-acetyllysine. Histidine 63 lines the heme b pocket. An N6-acetyllysine modification is found at lysine 82. Histidine 92 serves as a coordination point for heme b. An S-nitrosocysteine modification is found at cysteine 93. Lysine 144 is subject to N6-acetyllysine.

It belongs to the globin family. Heterotetramer of two alpha chains and two beta chains. Red blood cells.

Its function is as follows. Involved in oxygen transport from the lung to the various peripheral tissues. The chain is Hemoglobin subunit beta (HBB) from Taphozous georgianus (Sharp-nosed tomb bat).